The following is a 356-amino-acid chain: MTMNNFTTTMQDISTAFTIGSLEIKWYGIFITVGFVLAIILACVKLEKWYKISCNPFYWFVFIGIPVSLLGARIWSFIIGDASKSLATQNFFAAFFNFREGGLAIEGGVLLTVIAALIYFPLVLKKPQYNVKTKIGNEYYVKQVSMWVYADAIVPCILVGQIIGRWGNFFNQEVYGPIATEAELAWLKTLMPGVYNNMFITTTGNLHHPFFLYESFINFWFFLAIYIGGEFIKKRKAGDLAIAYFICYGLLRSCMEPFRYSDYQFATSIVMSVLFALFGIILLVCNHLVFSKHRDFKFWEFIIYKTKKFFKQDIKEFLDSKRNADNLKVQKQINKNITKEPNFYRKPSEIFYYNGY.

Helical transmembrane passes span 24-44 (IKWY…LACV), 59-79 (WFVF…SFII), 103-123 (LAIE…FPLV), and 144-164 (VSMW…QIIG). A 1,2-diacyl-sn-glycero-3-phospho-(1'-sn-glycerol) is bound at residue R165. 2 helical membrane-spanning segments follow: residues 209 to 229 (PFFL…YIGG) and 265 to 285 (FATS…LLVC).

Belongs to the Lgt family.

It is found in the cell membrane. It carries out the reaction L-cysteinyl-[prolipoprotein] + a 1,2-diacyl-sn-glycero-3-phospho-(1'-sn-glycerol) = an S-1,2-diacyl-sn-glyceryl-L-cysteinyl-[prolipoprotein] + sn-glycerol 1-phosphate + H(+). The protein operates within protein modification; lipoprotein biosynthesis (diacylglyceryl transfer). In terms of biological role, catalyzes the transfer of the diacylglyceryl group from phosphatidylglycerol to the sulfhydryl group of the N-terminal cysteine of a prolipoprotein, the first step in the formation of mature lipoproteins. This Malacoplasma penetrans (strain HF-2) (Mycoplasma penetrans) protein is Phosphatidylglycerol--prolipoprotein diacylglyceryl transferase.